The chain runs to 555 residues: Formate--tetrahydrofolate ligase (555 aa).

64-71 (TPAGEGKT) is an ATP binding site.

Belongs to the formate--tetrahydrofolate ligase family.

It carries out the reaction (6S)-5,6,7,8-tetrahydrofolate + formate + ATP = (6R)-10-formyltetrahydrofolate + ADP + phosphate. It participates in one-carbon metabolism; tetrahydrofolate interconversion. The sequence is that of Formate--tetrahydrofolate ligase from Dinoroseobacter shibae (strain DSM 16493 / NCIMB 14021 / DFL 12).